The chain runs to 118 residues: Holo-[acyl-carrier-protein] synthase (118 aa).

The Mg(2+) site is built by Asp8 and Glu57.

Belongs to the P-Pant transferase superfamily. AcpS family. Requires Mg(2+) as cofactor.

It is found in the cytoplasm. The enzyme catalyses apo-[ACP] + CoA = holo-[ACP] + adenosine 3',5'-bisphosphate + H(+). Functionally, transfers the 4'-phosphopantetheine moiety from coenzyme A to a Ser of acyl-carrier-protein. This chain is Holo-[acyl-carrier-protein] synthase, found in Pediococcus pentosaceus (strain ATCC 25745 / CCUG 21536 / LMG 10740 / 183-1w).